We begin with the raw amino-acid sequence, 164 residues long: Arginine repressor (164 aa).

Belongs to the ArgR family.

The protein resides in the cytoplasm. It participates in amino-acid biosynthesis; L-arginine biosynthesis [regulation]. In terms of biological role, regulates arginine biosynthesis genes. The chain is Arginine repressor from Mycobacterium avium (strain 104).